A 674-amino-acid chain; its full sequence is Death-associated protein kinase related (674 aa).

Residues 37-295 (EVEQTPFARG…ATGCLDHIWL (259 aa)) enclose the Protein kinase domain. Residues 43-51 (FARGKFAAV) and lysine 66 each bind ATP. The Proton acceptor role is filled by aspartate 160. Disordered regions lie at residues 308-388 (QPQS…GGSI), 412-440 (TLTS…SDKE), 511-583 (DSSG…TSGS), and 614-650 (TSSA…HHHV). Positions 312–343 (DAEEEEEEDVDDDVEDEEEEEQVEEEEEETQN) are enriched in acidic residues. Over residues 352–363 (PQQQQQPVQQHQ) the composition is skewed to low complexity. Residues 373 to 382 (KPTHNGHHRA) are compositionally biased toward basic residues. Phosphoserine occurs at positions 384, 387, 435, 437, and 521. Over residues 512–525 (SSGSAVARRSGGAV) the composition is skewed to low complexity. Composition is skewed to polar residues over residues 526–541 (TSSS…SVRL) and 555–564 (YKKQTSQNGC). 2 stretches are compositionally biased toward low complexity: residues 565–583 (SSTS…TSGS) and 614–631 (TSSA…TSAA). Basic residues predominate over residues 632 to 650 (HHLHHHHMHHHHHHHHHHV).

Belongs to the protein kinase superfamily. Ser/Thr protein kinase family.

It carries out the reaction L-seryl-[protein] + ATP = O-phospho-L-seryl-[protein] + ADP + H(+). It catalyses the reaction L-threonyl-[protein] + ATP = O-phospho-L-threonyl-[protein] + ADP + H(+). The sequence is that of Death-associated protein kinase related (Drak) from Drosophila melanogaster (Fruit fly).